A 297-amino-acid polypeptide reads, in one-letter code: Dehydrodolichyl diphosphate synthase complex subunit Nus1 (297 aa).

2 consecutive transmembrane segments (helical) span residues L7–L26 and C40–L56. Positions G63–H73 are enriched in basic residues. The disordered stretch occupies residues G63 to H86. The helical transmembrane segment at I121 to Y139 threads the bilayer. 2 N-linked (GlcNAc...) asparagine glycosylation sites follow: N148 and N275. The RXG motif; crucial for prenyltransferase activity motif lies at R294–G296. Isopentenyl diphosphate contacts are provided by L295 and G296.

It belongs to the UPP synthase family. The active dehydrodolichyl diphosphate synthase complex is a heterotetramer composed of a dimer of heterodimer of DHDDS and NUS1. Interacts with NPC2. Requires Mg(2+) as cofactor. In terms of tissue distribution, highly expressed in heart, liver, kidney and pancreas.

Its subcellular location is the endoplasmic reticulum membrane. It catalyses the reaction n isopentenyl diphosphate + (2E,6E)-farnesyl diphosphate = a di-trans,poly-cis-polyprenyl diphosphate + n diphosphate. It functions in the pathway protein modification; protein glycosylation. Its pathway is lipid metabolism. Functionally, with DHDDS, forms the dehydrodolichyl diphosphate synthase (DDS) complex, an essential component of the dolichol monophosphate (Dol-P) biosynthetic machinery. Both subunits contribute to enzymatic activity, i.e. condensation of multiple copies of isopentenyl pyrophosphate (IPP) to farnesyl pyrophosphate (FPP) to produce dehydrodolichyl diphosphate (Dedol-PP), a precursor of dolichol phosphate which is utilized as a sugar carrier in protein glycosylation in the endoplasmic reticulum (ER). Synthesizes long-chain polyprenols, mostly of C95 and C100 chain length. Regulates the glycosylation and stability of nascent NPC2, thereby promoting trafficking of LDL-derived cholesterol. Acts as a specific receptor for the N-terminus of Nogo-B, a neural and cardiovascular regulator. The chain is Dehydrodolichyl diphosphate synthase complex subunit Nus1 from Mus musculus (Mouse).